We begin with the raw amino-acid sequence, 309 residues long: Malonyl CoA-acyl carrier protein transacylase (309 aa).

Active-site residues include Ser-92 and His-201.

This sequence belongs to the FabD family.

The enzyme catalyses holo-[ACP] + malonyl-CoA = malonyl-[ACP] + CoA. It participates in lipid metabolism; fatty acid biosynthesis. This chain is Malonyl CoA-acyl carrier protein transacylase (fabD), found in Salmonella typhimurium (strain LT2 / SGSC1412 / ATCC 700720).